A 431-amino-acid polypeptide reads, in one-letter code: MSEAKGVGGIDPRATPGSAGAGERPPMGTLSPRAGEGELYAPMPSKHMVINLGPSHPAMHGVTRAVVELNGEIIEGMKLDIGFLHRGFEKSCENVTWGQVFPYTDRLNYVSSIMNNVGFALAVEKLAKLEIPERARYLRVITSEIHRICDHLTLVGAMAMELGAMTVFLYGIEARDLLWDRLAELCGARLTSNYARIGGVARDIPEGWQEKTLKVLDRVVAIREEIGQLLNRNRIFIDRCLNTGKVSREDALELGFTGPCLRASGEPYDVRKAAPYLVYDRLDFDIPVGSNGDNFDRYLMRMEEMRQSDKIIRQCFEQMAPGEIIVQDFRYALPPKPLVYGTIEGVMAHFKLVMEGIKVPAGEVYSYTEAANGELGFYVVSDGGGRPYKLGLRAPGWPMLAALPVMTKGSLLSDLIPTFDSINMIGGEVEQ.

Positions 1–37 are disordered; it reads MSEAKGVGGIDPRATPGSAGAGERPPMGTLSPRAGEG.

The protein belongs to the complex I 49 kDa subunit family. NDH-1 is composed of 14 different subunits. Subunits NuoB, C, D, E, F, and G constitute the peripheral sector of the complex.

The protein localises to the cell inner membrane. It catalyses the reaction a quinone + NADH + 5 H(+)(in) = a quinol + NAD(+) + 4 H(+)(out). Functionally, NDH-1 shuttles electrons from NADH, via FMN and iron-sulfur (Fe-S) centers, to quinones in the respiratory chain. The immediate electron acceptor for the enzyme in this species is believed to be ubiquinone. Couples the redox reaction to proton translocation (for every two electrons transferred, four hydrogen ions are translocated across the cytoplasmic membrane), and thus conserves the redox energy in a proton gradient. This is NADH-quinone oxidoreductase subunit D 2 from Anaeromyxobacter sp. (strain K).